The following is a 673-amino-acid chain: Acetate--CoA ligase [ADP-forming] II (673 aa).

One can recognise an ATP-grasp domain in the interval 9 to 45; sequence KALLEKYGIKTAKCIFCETEEQAVKAAKEIGFPVVMK. 35–46 lines the ATP pocket; sequence AKEIGFPVVMKV.

In the N-terminal section; belongs to the acetate CoA ligase beta subunit family. It in the C-terminal section; belongs to the acetate CoA ligase alpha subunit family. As to quaternary structure, homodimer.

It catalyses the reaction acetate + ATP + CoA = acetyl-CoA + ADP + phosphate. Activity requires divalent metal cations. Functionally, catalyzes the reversible conversion of a variety of acids to the corresponding acyl-CoA esters. Shows the highest activity with the aryl acids, indoleacetate and phenylacetate, as compared to acetate. In the reverse direction, phenylacetyl-CoA is the best substrate. Seems to be involved primarily in the degradation of aryl-CoA esters to the corresponding acids. Participates in the degradation of branched-chain amino acids via branched-chain-acyl-CoA esters. The protein is Acetate--CoA ligase [ADP-forming] II of Archaeoglobus fulgidus (strain ATCC 49558 / DSM 4304 / JCM 9628 / NBRC 100126 / VC-16).